The sequence spans 282 residues: Pantothenate synthetase (282 aa).

Residue 30-37 coordinates ATP; it reads MGFLHDGH. Catalysis depends on H37, which acts as the Proton donor. Q60 is a binding site for (R)-pantoate. Q60 lines the beta-alanine pocket. Position 146 to 149 (146 to 149) interacts with ATP; sequence GQKD. A (R)-pantoate-binding site is contributed by Q152. ATP-binding positions include I175 and 183–186; that span reads KSSR.

This sequence belongs to the pantothenate synthetase family. In terms of assembly, homodimer.

It localises to the cytoplasm. The enzyme catalyses (R)-pantoate + beta-alanine + ATP = (R)-pantothenate + AMP + diphosphate + H(+). It participates in cofactor biosynthesis; (R)-pantothenate biosynthesis; (R)-pantothenate from (R)-pantoate and beta-alanine: step 1/1. Functionally, catalyzes the condensation of pantoate with beta-alanine in an ATP-dependent reaction via a pantoyl-adenylate intermediate. The sequence is that of Pantothenate synthetase from Campylobacter jejuni subsp. doylei (strain ATCC BAA-1458 / RM4099 / 269.97).